Here is a 336-residue protein sequence, read N- to C-terminus: Geranylgeranyl pyrophosphate synthase 6, mitochondrial (336 aa).

Residues 1 to 22 constitute a mitochondrion transit peptide; sequence MRPRYSLILSAMRLIRPSNRRL. Residues Lys80, Arg83, and His112 each contribute to the isopentenyl diphosphate site. 2 residues coordinate Mg(2+): Asp119 and Asp125. Residue Arg130 participates in dimethylallyl diphosphate binding. Residue Arg131 coordinates isopentenyl diphosphate. 5 residues coordinate dimethylallyl diphosphate: Lys221, Thr222, Gln259, Lys276, and Lys286.

The protein belongs to the FPP/GGPP synthase family. As to quaternary structure, monomer. Mg(2+) is required as a cofactor.

The protein resides in the mitochondrion. It catalyses the reaction isopentenyl diphosphate + dimethylallyl diphosphate = (2E)-geranyl diphosphate + diphosphate. The enzyme catalyses isopentenyl diphosphate + (2E)-geranyl diphosphate = (2E,6E)-farnesyl diphosphate + diphosphate. It carries out the reaction isopentenyl diphosphate + (2E,6E)-farnesyl diphosphate = (2E,6E,10E)-geranylgeranyl diphosphate + diphosphate. The protein operates within isoprenoid biosynthesis; farnesyl diphosphate biosynthesis; farnesyl diphosphate from geranyl diphosphate and isopentenyl diphosphate: step 1/1. Its pathway is isoprenoid biosynthesis; geranyl diphosphate biosynthesis; geranyl diphosphate from dimethylallyl diphosphate and isopentenyl diphosphate: step 1/1. It participates in isoprenoid biosynthesis; geranylgeranyl diphosphate biosynthesis; geranylgeranyl diphosphate from farnesyl diphosphate and isopentenyl diphosphate: step 1/1. Its function is as follows. Catalyzes the trans-addition of the three molecules of IPP onto DMAPP to form geranylgeranyl pyrophosphate. The chain is Geranylgeranyl pyrophosphate synthase 6, mitochondrial from Arabidopsis thaliana (Mouse-ear cress).